The chain runs to 317 residues: Ribosomal RNA large subunit methyltransferase F (317 aa).

It belongs to the methyltransferase superfamily. METTL16/RlmF family.

Its subcellular location is the cytoplasm. It catalyses the reaction adenosine(1618) in 23S rRNA + S-adenosyl-L-methionine = N(6)-methyladenosine(1618) in 23S rRNA + S-adenosyl-L-homocysteine + H(+). In terms of biological role, specifically methylates the adenine in position 1618 of 23S rRNA. The chain is Ribosomal RNA large subunit methyltransferase F from Pseudomonas putida (strain ATCC 47054 / DSM 6125 / CFBP 8728 / NCIMB 11950 / KT2440).